The primary structure comprises 354 residues: Protein-arginine kinase (354 aa).

Residues 24-254 (IVLSSRIRLA…QQIIQQEKMA (231 aa)) form the Phosphagen kinase C-terminal domain. ATP is bound by residues 27–31 (SSRIR), H92, R125, 176–180 (RASVM), and 207–212 (RGIYGE). The short motif at 337 to 342 (RDYRRA) is the RDXXRA motif of the pArg binding pocket involved in allosteric regulation element.

It belongs to the ATP:guanido phosphotransferase family.

It carries out the reaction L-arginyl-[protein] + ATP = N(omega)-phospho-L-arginyl-[protein] + ADP + H(+). With respect to regulation, appears to be allosterically activated by the binding of pArg-containing polypeptides to the pArg-binding pocket localized in the C-terminal domain of McsB. Catalyzes the specific phosphorylation of arginine residues in a large number of proteins. Is part of the bacterial stress response system. Protein arginine phosphorylation has a physiologically important role and is involved in the regulation of many critical cellular processes, such as protein homeostasis, motility, competence, and stringent and stress responses, by regulating gene expression and protein activity. The chain is Protein-arginine kinase from Bacillus anthracis (strain A0248).